We begin with the raw amino-acid sequence, 75 residues long: Notewaprin-b (75 aa).

A signal peptide spans 1-24 (MSSGGLLLLLGLLTLWAELTPVSS). In terms of domain architecture, WAP spans 27–72 (RPKKPGLCPPRPQKPPCVRECKNDWICPGEQKCCRYGCIYECRDPI). Intrachain disulfides connect cysteine 34/cysteine 60, cysteine 43/cysteine 64, cysteine 47/cysteine 59, and cysteine 53/cysteine 68.

It belongs to the venom waprin family. Expressed by the venom gland.

The protein localises to the secreted. Damages membranes of susceptible bacteria. Has no hemolytic activity. Not toxic to mice. Does not inhibit the proteinases elastase and cathepsin G. The sequence is that of Notewaprin-b from Notechis scutatus scutatus (Mainland tiger snake).